The chain runs to 302 residues: MKKNRLTHLKALEAESIQIMREVAAEFDNPVMLYSVGKDSSVLLHLARKAFYPGKIPFPLLHVDTNWKFKEMIAFRDNIAKKYDFDLLVHKNPRGMEMGISPFEHGSAKHTDIMKTEGLKQALDKYGFDAAFGGARRDEEKSRAKERVYSFRDKKHRWDPKNQRPELWNIYNAKVDRGESIRVFPLSNWTELDIWQYIYQEDIEMVPLYFAKKRPVVERDGALIMVDDERMPLKEGEVPEMKMVRFRTLGCYPLTGAIESQATTLPEIIQEMLLTTTSERQGRVIDNDSAGSMEKKKMEGYF.

This sequence belongs to the PAPS reductase family. CysD subfamily. In terms of assembly, heterodimer composed of CysD, the smaller subunit, and CysN.

It carries out the reaction sulfate + ATP + H(+) = adenosine 5'-phosphosulfate + diphosphate. It functions in the pathway sulfur metabolism; hydrogen sulfide biosynthesis; sulfite from sulfate: step 1/3. Its function is as follows. With CysN forms the ATP sulfurylase (ATPS) that catalyzes the adenylation of sulfate producing adenosine 5'-phosphosulfate (APS) and diphosphate, the first enzymatic step in sulfur assimilation pathway. APS synthesis involves the formation of a high-energy phosphoric-sulfuric acid anhydride bond driven by GTP hydrolysis by CysN coupled to ATP hydrolysis by CysD. The polypeptide is Sulfate adenylyltransferase subunit 2 (Psychromonas ingrahamii (strain DSM 17664 / CCUG 51855 / 37)).